The following is a 137-amino-acid chain: Small ribosomal subunit protein bS6 (137 aa).

This sequence belongs to the bacterial ribosomal protein bS6 family.

Functionally, binds together with bS18 to 16S ribosomal RNA. The polypeptide is Small ribosomal subunit protein bS6 (Sulfurimonas denitrificans (strain ATCC 33889 / DSM 1251) (Thiomicrospira denitrificans (strain ATCC 33889 / DSM 1251))).